A 234-amino-acid chain; its full sequence is Small ribosomal subunit protein uS3 (234 aa).

Residues 39–107 form the KH type-2 domain; the sequence is IRKFLKKELY…EVSINIKEVK (69 aa).

Belongs to the universal ribosomal protein uS3 family. In terms of assembly, part of the 30S ribosomal subunit. Forms a tight complex with proteins S10 and S14.

Functionally, binds the lower part of the 30S subunit head. Binds mRNA in the 70S ribosome, positioning it for translation. The polypeptide is Small ribosomal subunit protein uS3 (Helicobacter pylori (strain P12)).